The chain runs to 215 residues: Histone-like protein 18C (215 aa).

Residues C140–M215 form a disordered region. Basic residues-rich tracts occupy residues S149–K190 and A197–M215.

Not known. Encoded in the intron of cAMP-dependent protein kinase regulatory chain type I. The protein is Histone-like protein 18C (Mst77F) of Drosophila melanogaster (Fruit fly).